A 396-amino-acid chain; its full sequence is Succinyl-CoA:mesaconate CoA-transferase (396 aa).

The Nucleophile role is filled by Asp175.

This sequence belongs to the CoA-transferase III family. Homodimer.

The catalysed reaction is mesaconate + succinyl-CoA = 2-methylfumaryl-CoA + succinate. Shows highest activity at 4 M KCl. Does not require divalent ions for activity. In terms of biological role, involved in the methylaspartate cycle. Catalyzes the transfer of the CoA moiety from succinyl-CoA to mesaconate to generate mesaconyl-CoA (2-methylfumaryl-CoA) and succinate. Also shows high activity with methylsuccinate as CoA-acceptor, and only low activity with glutarate, acrylate and itaconate. Cannot use other CoA donors like acetyl-CoA, propionyl-CoA, butyryl-CoA or acetoacetyl-CoA. The sequence is that of Succinyl-CoA:mesaconate CoA-transferase from Haloarcula hispanica (strain ATCC 33960 / DSM 4426 / JCM 8911 / NBRC 102182 / NCIMB 2187 / VKM B-1755).